The primary structure comprises 149 residues: Transcriptional repressor NrdR (149 aa).

Residues 3–34 (CPFCSIQETKVIDSRLVADGHQVRRRRECTMC) fold into a zinc finger. One can recognise an ATP-cone domain in the interval 49-139 (PRVVKRDGSR…VYRSFEDIRE (91 aa)).

This sequence belongs to the NrdR family. It depends on Zn(2+) as a cofactor.

Functionally, negatively regulates transcription of bacterial ribonucleotide reductase nrd genes and operons by binding to NrdR-boxes. The sequence is that of Transcriptional repressor NrdR from Pseudoalteromonas atlantica (strain T6c / ATCC BAA-1087).